Here is a 368-residue protein sequence, read N- to C-terminus: (3S,6E)-nerolidol synthase (368 aa).

Positions 91, 228, and 232 each coordinate Mg(2+). The DDXXE motif motif lies at 91-95; that stretch reads DDLLE.

It belongs to the terpene synthase family. Requires Mg(2+) as cofactor. The cofactor is Mn(2+).

The enzyme catalyses (2E,6E)-farnesyl diphosphate + H2O = (3S,6E)-nerolidol + diphosphate. The catalysed reaction is (2E)-geranyl diphosphate + H2O = (S)-linalool + diphosphate. The protein operates within secondary metabolite biosynthesis; terpenoid biosynthesis. In terms of biological role, sesquiterpene synthase converting farnesyl diphosphate to nerolidol. Also has a monoterpene synthase activity, converting geranyl diphosphate into linalool as the major product. Has no diterpene synthase activity. The chain is (3S,6E)-nerolidol synthase from Selaginella moellendorffii (Spikemoss).